The primary structure comprises 257 residues: GTP cyclohydrolase FolE2 (257 aa).

It belongs to the GTP cyclohydrolase IV family.

The enzyme catalyses GTP + H2O = 7,8-dihydroneopterin 3'-triphosphate + formate + H(+). The protein operates within cofactor biosynthesis; 7,8-dihydroneopterin triphosphate biosynthesis; 7,8-dihydroneopterin triphosphate from GTP: step 1/1. Its function is as follows. Converts GTP to 7,8-dihydroneopterin triphosphate. The sequence is that of GTP cyclohydrolase FolE2 from Dictyoglomus thermophilum (strain ATCC 35947 / DSM 3960 / H-6-12).